The chain runs to 478 residues: Isoeugenol monooxygenase (478 aa).

The Fe cation site is built by histidine 167, histidine 218, histidine 282, and histidine 471.

Belongs to the carotenoid oxygenase family. In terms of assembly, monomer. The cofactor is Fe(2+).

It catalyses the reaction (E)-isoeugenol + O2 = vanillin + acetaldehyde. Its activity is regulated as follows. Inhibited by HgCl(2), AgNO(3), CuCl(2), phenylhydrazine, 8-hydroxyquinoline, R-cycloserine and p-chloromercuribenzoic acid. Its function is as follows. Involved in isoeugenol degradation. Catalyzes the oxidative cleavage of the side chain double-bond of isoeugenol to form vanillin and acetaldehyde. The polypeptide is Isoeugenol monooxygenase (Pseudomonas putida (Arthrobacter siderocapsulatus)).